A 394-amino-acid chain; its full sequence is MSKEKFERTKPHVNVGTIGHVDHGKTTLTAAITTVLSKHFGGAARAFDQIDNAPEEKARGITINTSHVEYDTETRHYAHVDCPGHADYVKNMITGAAQMDGAILVVAATDGPMPQTREHILLGRQVGVPYIIVFLNKCDMVDDEELLELVEMEVRELLSQYDFPGDDTPIVRGSALQALNGVPEWEEKILELAHHLDTYIPEPERAIDKPFLLPIEDVFSISGRGTVVTGRVERGIIKSGEEVEIVGIKETTKTTVTGVEMFRKLLDEGRAGENVGALLRGTKREEIERGQVLAKPGTITPHTDFESEVYVLSKEEGGRHTPFFKGYRPQFYFRTTDVTGTIELPEGVEMVMPGDNIKMTVSLIHPIAMDEGLRFAIREGGRTVGAGVVAKIIK.

One can recognise a tr-type G domain in the interval 10-204 (KPHVNVGTIG…HLDTYIPEPE (195 aa)). A G1 region spans residues 19 to 26 (GHVDHGKT). 19–26 (GHVDHGKT) is a binding site for GTP. Thr26 serves as a coordination point for Mg(2+). Residues 60-64 (GITIN) are G2. A G3 region spans residues 81–84 (DCPG). Residues 81 to 85 (DCPGH) and 136 to 139 (NKCD) each bind GTP. The G4 stretch occupies residues 136 to 139 (NKCD). A G5 region spans residues 174–176 (SAL).

Belongs to the TRAFAC class translation factor GTPase superfamily. Classic translation factor GTPase family. EF-Tu/EF-1A subfamily. In terms of assembly, monomer.

It is found in the cytoplasm. The catalysed reaction is GTP + H2O = GDP + phosphate + H(+). Its function is as follows. GTP hydrolase that promotes the GTP-dependent binding of aminoacyl-tRNA to the A-site of ribosomes during protein biosynthesis. This Actinobacillus pleuropneumoniae serotype 5b (strain L20) protein is Elongation factor Tu.